A 520-amino-acid chain; its full sequence is Amine oxidase [flavin-containing] B (520 aa).

At Ser-2 the chain carries N-acetylserine. Topologically, residues Ser-2–Val-489 are cytoplasmic. The residue at position 52 (Lys-52) is an N6-acetyllysine. Cys-397 carries the post-translational modification S-8alpha-FAD cysteine. Residues Pro-490–Leu-516 traverse the membrane as a helical; Anchor for type IV membrane protein segment. The Mitochondrial intermembrane portion of the chain corresponds to Leu-517 to Val-520.

It belongs to the flavin monoamine oxidase family. In terms of assembly, monomer, homo- or heterodimer (containing two subunits of similar size). Each subunit contains a covalently bound flavin. Enzymatically active as monomer. Requires FAD as cofactor.

The protein resides in the mitochondrion outer membrane. It catalyses the reaction a secondary aliphatic amine + O2 + H2O = a primary amine + an aldehyde + H2O2. It carries out the reaction (R)-adrenaline + O2 + H2O = (R)-3,4-dihydroxymandelaldehyde + methylamine + H2O2. The enzyme catalyses a primary methyl amine + O2 + H2O = an aldehyde + H2O2 + NH4(+). The catalysed reaction is benzylamine + O2 + H2O = benzaldehyde + H2O2 + NH4(+). It catalyses the reaction dopamine + O2 + H2O = 3,4-dihydroxyphenylacetaldehyde + H2O2 + NH4(+). It carries out the reaction tyramine + O2 + H2O = (4-hydroxyphenyl)acetaldehyde + H2O2 + NH4(+). The enzyme catalyses (R)-noradrenaline + O2 + H2O = (R)-3,4-dihydroxymandelaldehyde + H2O2 + NH4(+). The catalysed reaction is 2-phenylethylamine + O2 + H2O = 2-phenylacetaldehyde + H2O2 + NH4(+). It catalyses the reaction N-acetylputrescine + O2 + H2O = 4-acetamidobutanal + H2O2 + NH4(+). In terms of biological role, catalyzes the oxidative deamination of primary and some secondary amines such as neurotransmitters, and exogenous amines including the tertiary amine, neurotoxin 1-methyl-4-phenyl-1,2,3,6-tetrahydropyridine (MPTP), with concomitant reduction of oxygen to hydrogen peroxide and participates in the metabolism of neuroactive and vasoactive amines in the central nervous system and peripheral tissues. Preferentially degrades benzylamine and phenylethylamine. This Canis lupus familiaris (Dog) protein is Amine oxidase [flavin-containing] B.